A 207-amino-acid polypeptide reads, in one-letter code: Large ribosomal subunit protein uL4 (207 aa).

A disordered region spans residues 49–75 (HAVKNRSAVSGGGRKPWKQKGTGRARA).

It belongs to the universal ribosomal protein uL4 family. As to quaternary structure, part of the 50S ribosomal subunit.

Functionally, one of the primary rRNA binding proteins, this protein initially binds near the 5'-end of the 23S rRNA. It is important during the early stages of 50S assembly. It makes multiple contacts with different domains of the 23S rRNA in the assembled 50S subunit and ribosome. Forms part of the polypeptide exit tunnel. This is Large ribosomal subunit protein uL4 from Leuconostoc mesenteroides subsp. mesenteroides (strain ATCC 8293 / DSM 20343 / BCRC 11652 / CCM 1803 / JCM 6124 / NCDO 523 / NBRC 100496 / NCIMB 8023 / NCTC 12954 / NRRL B-1118 / 37Y).